A 181-amino-acid chain; its full sequence is Oligoribonuclease (181 aa).

One can recognise an Exonuclease domain in the interval 8–171 (LVWIDMEMTG…DDIRESIAEL (164 aa)). Tyr129 is a catalytic residue.

It belongs to the oligoribonuclease family.

The protein localises to the cytoplasm. 3'-to-5' exoribonuclease specific for small oligoribonucleotides. The protein is Oligoribonuclease of Pseudoalteromonas atlantica (strain T6c / ATCC BAA-1087).